Reading from the N-terminus, the 969-residue chain is Leucine--tRNA ligase (969 aa).

The 'HIGH' region motif lies at 46 to 56 (PYLNGVLHAGH). The 'KMSKS' region signature appears at 658–662 (KLSKS). K661 lines the ATP pocket.

This sequence belongs to the class-I aminoacyl-tRNA synthetase family.

The protein resides in the cytoplasm. The enzyme catalyses tRNA(Leu) + L-leucine + ATP = L-leucyl-tRNA(Leu) + AMP + diphosphate. This Methanococcus aeolicus (strain ATCC BAA-1280 / DSM 17508 / OCM 812 / Nankai-3) protein is Leucine--tRNA ligase.